Consider the following 251-residue polypeptide: 1-(5-phosphoribosyl)-5-[(5-phosphoribosylamino)methylideneamino] imidazole-4-carboxamide isomerase (251 aa).

The active-site Proton acceptor is the D8. D131 (proton donor) is an active-site residue.

This sequence belongs to the HisA/HisF family.

It is found in the cytoplasm. It catalyses the reaction 1-(5-phospho-beta-D-ribosyl)-5-[(5-phospho-beta-D-ribosylamino)methylideneamino]imidazole-4-carboxamide = 5-[(5-phospho-1-deoxy-D-ribulos-1-ylimino)methylamino]-1-(5-phospho-beta-D-ribosyl)imidazole-4-carboxamide. Its pathway is amino-acid biosynthesis; L-histidine biosynthesis; L-histidine from 5-phospho-alpha-D-ribose 1-diphosphate: step 4/9. This chain is 1-(5-phosphoribosyl)-5-[(5-phosphoribosylamino)methylideneamino] imidazole-4-carboxamide isomerase, found in Burkholderia ambifaria (strain MC40-6).